The primary structure comprises 77 residues: UPF0270 protein Spro_4577 (77 aa).

The protein belongs to the UPF0270 family.

This is UPF0270 protein Spro_4577 from Serratia proteamaculans (strain 568).